The primary structure comprises 389 residues: (+)-bicyclogermacrene synthase TS4 (389 aa).

Residues D136, E140, H284, G288, and D292 each coordinate Mg(2+). The DDxx(x)D/E motif motif lies at 136–140 (DEVCE). The NDxxSxxxD/E motif motif lies at 284–292 (HDFIGLQKD).

The protein belongs to the terpene synthase family.

It catalyses the reaction (2E,6E)-farnesyl diphosphate = bicyclogermacrene + diphosphate. Catalyzes the cyclization of trans,trans-farnesyl diphosphate (FPP) to the bicyclic sesquiterpene bicyclogermacrene. This chain is (+)-bicyclogermacrene synthase TS4, found in Penicillium expansum (Blue mold rot fungus).